The sequence spans 626 residues: 4-hydroxy-3-methylbut-2-en-1-yl diphosphate synthase (flavodoxin) (626 aa).

C521, C524, C555, and E562 together coordinate [4Fe-4S] cluster.

This sequence belongs to the IspG family. [4Fe-4S] cluster is required as a cofactor.

The enzyme catalyses (2E)-4-hydroxy-3-methylbut-2-enyl diphosphate + oxidized [flavodoxin] + H2O + 2 H(+) = 2-C-methyl-D-erythritol 2,4-cyclic diphosphate + reduced [flavodoxin]. It participates in isoprenoid biosynthesis; isopentenyl diphosphate biosynthesis via DXP pathway; isopentenyl diphosphate from 1-deoxy-D-xylulose 5-phosphate: step 5/6. Functionally, converts 2C-methyl-D-erythritol 2,4-cyclodiphosphate (ME-2,4cPP) into 1-hydroxy-2-methyl-2-(E)-butenyl 4-diphosphate. The protein is 4-hydroxy-3-methylbut-2-en-1-yl diphosphate synthase (flavodoxin) of Bacteroides fragilis (strain ATCC 25285 / DSM 2151 / CCUG 4856 / JCM 11019 / LMG 10263 / NCTC 9343 / Onslow / VPI 2553 / EN-2).